Consider the following 137-residue polypeptide: Probable leaf thionin (137 aa).

The N-terminal stretch at 1–28 (MATNKSIKSVVICVLILGLVLEQVQVEG) is a signal peptide. Intrachain disulfides connect Cys31/Cys68, Cys32/Cys60, Cys40/Cys58, and Cys44/Cys54. Residues 75–137 (LNLLPESGEP…DGDVIQSVEA (63 aa)) constitute a propeptide, acidic domain.

Belongs to the plant thionin (TC 1.C.44) family. 4 C-C subfamily.

It is found in the secreted. Its function is as follows. Thionins are small plant proteins which are toxic to animal cells. They seem to exert their toxic effect at the level of the cell membrane. Their precise function is not known. The chain is Probable leaf thionin from Hordeum vulgare (Barley).